Reading from the N-terminus, the 1121-residue chain is PR domain zinc finger protein 10 (1121 aa).

Disordered regions lie at residues 1–24 and 92–125; these read MEAK…NTPQ and TEAS…MDDW. Residues 106–124 show a composition bias toward acidic residues; the sequence is VDSEDEEEDNDSEDSEMDD. The region spanning 173–290 is the SET domain; it reads LPLVLYIDRF…PKQELKVWYA (118 aa). The N-terminal PR domain; essential for transcriptional activation stretch occupies residues 192-295; the sequence is IPKRTQFGPL…KVWYAASYAE (104 aa). A C2H2-type 1 zinc finger spans residues 319 to 341; sequence WPCYECNRRFMSSEQLQQHLNMH. 2 disordered regions span residues 350–387 and 419–473; these read RPKS…SADK and ESME…PHLT. Over residues 351-374 the composition is skewed to basic residues; it reads PKSRGRGRGRKRFGGARRPGRRTK. 9 consecutive C2H2-type zinc fingers follow at residues 500–522, 529–551, 557–579, 585–608, 613–635, 641–664, 696–719, 741–764, and 803–826; these read FKCP…MRFH, HVCH…LVLH, YSCL…VGIH, FLCP…RSFH, FQCS…MLRH, FLCS…QRMH, FKCR…SKRH, YYCQ…LKNH, and VCCP…RKKH. A C-terminal glutamine-rich region; essential for transcriptional activation region spans residues 871-1101; sequence QAMTELSQTL…PAGGQQATTQ (231 aa). The disordered stretch occupies residues 1077-1097; sequence VPSTATQGHPDPLEQPAGGQQ.

Belongs to the class V-like SAM-binding methyltransferase superfamily.

It localises to the nucleus. In terms of biological role, transcriptional activator, essential for early embryonic development and survival of embryonic stem cells (ESCs). Supports cell growth and survival during early development by transcriptionally activating the expression of the translation initiation factor EIF3B, to sustain global translation. Activates the transcription of FLNC. This chain is PR domain zinc finger protein 10 (prdm10), found in Danio rerio (Zebrafish).